Reading from the N-terminus, the 420-residue chain is Glucose-1-phosphate adenylyltransferase (420 aa).

Residues tyrosine 107, glycine 172, 187 to 188, and serine 205 contribute to the alpha-D-glucose 1-phosphate site; that span reads EK.

Belongs to the bacterial/plant glucose-1-phosphate adenylyltransferase family. In terms of assembly, homotetramer.

The enzyme catalyses alpha-D-glucose 1-phosphate + ATP + H(+) = ADP-alpha-D-glucose + diphosphate. The protein operates within glycan biosynthesis; glycogen biosynthesis. Its function is as follows. Involved in the biosynthesis of ADP-glucose, a building block required for the elongation reactions to produce glycogen. Catalyzes the reaction between ATP and alpha-D-glucose 1-phosphate (G1P) to produce pyrophosphate and ADP-Glc. The chain is Glucose-1-phosphate adenylyltransferase from Rhodopseudomonas palustris (strain HaA2).